The sequence spans 120 residues: Small ribosomal subunit protein bS6 (120 aa).

Residues Ser-97–Thr-112 are compositionally biased toward polar residues. The interval Ser-97–Asn-120 is disordered.

This sequence belongs to the bacterial ribosomal protein bS6 family.

Its function is as follows. Binds together with bS18 to 16S ribosomal RNA. This is Small ribosomal subunit protein bS6 from Rickettsia bellii (strain OSU 85-389).